The chain runs to 505 residues: AMP phosphorylase (505 aa).

Residues Gly-170, 196-201 (SRAITS), and Thr-205 contribute to the AMP site. Catalysis depends on Asp-258, which acts as the Proton donor. AMP is bound by residues Ser-266 and Lys-290.

This sequence belongs to the thymidine/pyrimidine-nucleoside phosphorylase family. Type 2 subfamily.

It carries out the reaction AMP + phosphate = alpha-D-ribose 1,5-bisphosphate + adenine. It catalyses the reaction CMP + phosphate = cytosine + alpha-D-ribose 1,5-bisphosphate. The enzyme catalyses UMP + phosphate = alpha-D-ribose 1,5-bisphosphate + uracil. Its function is as follows. Catalyzes the conversion of AMP and phosphate to adenine and ribose 1,5-bisphosphate (R15P). Exhibits phosphorylase activity toward CMP and UMP in addition to AMP. Functions in an archaeal AMP degradation pathway, together with R15P isomerase and RubisCO. The polypeptide is AMP phosphorylase (Methanococcus vannielii (strain ATCC 35089 / DSM 1224 / JCM 13029 / OCM 148 / SB)).